Consider the following 698-residue polypeptide: Cytochrome c oxidase subunit 1 (698 aa).

The helical transmembrane segment at 65-85 threads the bilayer; it reads INYLYFSMVTGLSGAALATMI. Position 88 (glutamate 88) interacts with Ca(2+). Histidine 111 provides a ligand contact to Fe(II)-heme a. A run of 8 helical transmembrane segments spans residues 113–133, 147–167, 304–324, 349–369, 395–415, 434–454, 468–488, and 498–518; these read LIMVFFVVVPILFGGFANFLI, LNSIGFWIQPCGYILLAKIGF, ILILSVVFAGISTTISFTNLL, IFLTLRMLATITPVLGAAVIM, LFWFFGHPEVYVLIIPTFGFI, IWAIYVMAYMGYLVWGHHMYL, ITIMISMPATIKVVNWTLSLV, and FLFSMSFLLLFLVAGFTGMWL. Histidine 401 contacts Cu cation. The 1'-histidyl-3'-tyrosine (His-Tyr) cross-link spans 401-405; it reads HPEVY. Residue tyrosine 405 coordinates O2. The Cu cation site is built by histidine 450 and histidine 451. The Mg(2+) site is built by histidine 528 and aspartate 529. Transmembrane regions (helical) follow at residues 533 to 553, 574 to 594, and 613 to 633; these read VVAHFHIMLSGAAITGIFSGF, LIYYSGGQWVAFVPQFYLGFS, and MSTAGHFITLIGIMFFFLMIF. Histidine 536 is a heme a3 binding site. Histidine 538 provides a ligand contact to Fe(II)-heme a.

It belongs to the heme-copper respiratory oxidase family. In terms of assembly, component of the cytochrome c oxidase (complex IV, CIV), a multisubunit enzyme composed of a catalytic core of 3 subunits and several supernumerary subunits. The complex exists as a monomer or a dimer and forms supercomplexes (SCs) in the inner mitochondrial membrane with ubiquinol-cytochrome c oxidoreductase (cytochrome b-c1 complex, complex III, CIII). Heme is required as a cofactor. The cofactor is Cu cation.

The protein localises to the mitochondrion inner membrane. It carries out the reaction 4 Fe(II)-[cytochrome c] + O2 + 8 H(+)(in) = 4 Fe(III)-[cytochrome c] + 2 H2O + 4 H(+)(out). It participates in energy metabolism; oxidative phosphorylation. Component of the cytochrome c oxidase, the last enzyme in the mitochondrial electron transport chain which drives oxidative phosphorylation. The respiratory chain contains 3 multisubunit complexes succinate dehydrogenase (complex II, CII), ubiquinol-cytochrome c oxidoreductase (cytochrome b-c1 complex, complex III, CIII) and cytochrome c oxidase (complex IV, CIV), that cooperate to transfer electrons derived from NADH and succinate to molecular oxygen, creating an electrochemical gradient over the inner membrane that drives transmembrane transport and the ATP synthase. Cytochrome c oxidase is the component of the respiratory chain that catalyzes the reduction of oxygen to water. Electrons originating from reduced cytochrome c in the intermembrane space (IMS) are transferred via the dinuclear copper A center (CU(A)) of subunit 2 and heme A of subunit 1 to the active site in subunit 1, a binuclear center (BNC) formed by heme A3 and copper B (CU(B)). The BNC reduces molecular oxygen to 2 water molecules using 4 electrons from cytochrome c in the IMS and 4 protons from the mitochondrial matrix. In Tetrahymena pyriformis, this protein is Cytochrome c oxidase subunit 1 (COI).